The sequence spans 2764 residues: Teneurin-2 (2764 aa).

In terms of domain architecture, Teneurin N-terminal spans 1-375 (MDVKDRRHRS…KPSKYCSWKC (375 aa)). Over 1–379 (MDVKDRRHRS…YCSWKCAALS (379 aa)) the chain is Cytoplasmic. Ser90 and Ser124 each carry phosphoserine. Positions 111 to 271 (TGSDADSDTE…HHHSSANSLN (161 aa)) are disordered. The span at 141 to 155 (SSGLSSRENSALTLT) shows a compositional bias: polar residues. Thr155 carries the post-translational modification Phosphothreonine. At Ser157 the chain carries Phosphoserine. Residues 159-168 (NENKSDDDNG) show a composition bias toward basic and acidic residues. Residues 174-188 (TSSSSLLPSAQLPSS) show a composition bias toward low complexity. Over residues 202-211 (DSNTSHQIMD) the composition is skewed to polar residues. Positions 229 to 240 (SGPQQASSSGPP) are enriched in low complexity. The chain crosses the membrane as a helical span at residues 380–400 (AIAAALLLAILLAYFIAMHLL). At 401–2764 (GLNWQLQPAD…FLRQNEMGKR (2364 aa)) the chain is on the extracellular side. Residues Asn443 and Asn482 are each glycosylated (N-linked (GlcNAc...) asparagine). EGF-like domains follow at residues 575-603 (DCPRNCHGNGECVSGLCHCFPGFLGADCA), 598-634 (LGADCAKAACPVLCSGNGQYSKGTCQCYSGWKGAECD), 636-668 (PMNQCIDPSCGGHGSCIDGNCVCAAGYKGEHCE), 669-701 (EVDCLDPTCSSHGVCVNGECLCSPGWGGLNCEL), 702-735 (ARVQCPDQCSGHGTYLPDSGLCSCDPNWMGPDCS), 737-765 (VCSVDCGTHGVCIGGACRCEEGWTGAACD), 768-796 (VCHPRCIEHGTCKDGKCECREGWNGEHCT), and 798-831 (DGCPDLCNGNGRCTLGQNSWQCVCQTGWRGPGCN). 22 disulfides stabilise this stretch: Cys576–Cys586, Cys580–Cys591, Cys593–Cys602, Cys611–Cys622, Cys624–Cys633, Cys640–Cys651, Cys645–Cys656, Cys658–Cys667, Cys672–Cys683, Cys677–Cys688, Cys690–Cys699, Cys710–Cys723, Cys725–Cys734, Cys738–Cys748, Cys742–Cys753, Cys755–Cys764, Cys769–Cys779, Cys773–Cys784, Cys786–Cys795, Cys800–Cys810, Cys804–Cys819, and Cys821–Cys830. Residues Asn915, Asn938, and Asn1257 are each glycosylated (N-linked (GlcNAc...) asparagine). 5 NHL repeats span residues 1262 to 1306 (LELR…VKSL), 1332 to 1376 (ARCG…NGII), 1391 to 1442 (LSCD…IAGR), 1464 to 1491 (LESASAIAISHTGVLYITETDEKKINRL), and 1520 to 1563 (CYSG…VSKN). A YD 1 repeat occupies 1573 to 1592 (YEAASPGEQELYVFNADGIH). A glycan (N-linked (GlcNAc...) asparagine) is linked at Asn1606. YD repeat units lie at residues 1609 to 1629 (YSADNDVTELIDNNGNSLKIR), 1672 to 1691 (YDGNTGLLATKSDETGWTTF), and 1692 to 1714 (YDYDHEGRLTNVTRPTGVVTSLH). 5 N-linked (GlcNAc...) asparagine glycosylation sites follow: Asn1702, Asn1739, Asn1763, Asn1797, and Asn1882. YD repeat units lie at residues 1885–1904 (YFFNGRLAGLQRGAMSERTD), 1926–1944 (YLDKSMVLLLQSQRQYIFE), 1945–1965 (YDSSDRLHAVTMPSVARHSMS), 1972–1989 (YIRNIYNPPESNASVIFD), 1990–2011 (YSDDGRILKTSFLGTGRQVFYK), 2012–2029 (YGKLSKLSEIVYDSTAVT), 2032–2052 (YDETTGVLKMVNLQSGGFSCT), 2055–2075 (YRKVGPLVDKQIYRFSEEGMI), 2083–2103 (YHDNSFRIASIKPVISETPLP), 2109–2126 (YDEISGKVEHFGKFGVIY), 2127–2153 (YDINQIITTAVMTLSKHFDTHGRIKEV), 2155–2168 (YEMFRSLMYWMTVQ), 2169–2192 (YDSMGRVIKRELKLGPYANTTKYT), 2195–2215 (YDGDGQLQSVAVNDRPTWRYS), 2216–2236 (YDLNGNLHLLNPGNSARLMPL), 2238–2258 (YDLRDRITRLGDVQYKIDDDG), 2270–2290 (YNSKGLLTRAYNKASGWSVQY), and 2292–2312 (YDGVGRRASYKTNLGHHLQYF). Asn1983 carries N-linked (GlcNAc...) asparagine glycosylation. Asn2187 carries N-linked (GlcNAc...) asparagine glycosylation. An N-linked (GlcNAc...) asparagine glycan is attached at Asn2327. The stretch at 2338–2379 (YDLQGHLFAMESSSGEEYYVASDNTGTPLAVYSINGLMIKQL) is one YD 23 repeat. A glycan (N-linked (GlcNAc...) asparagine) is linked at Asn2638.

The protein belongs to the tenascin family. Teneurin subfamily. Homodimer; disulfide-linked. Heterodimer with either TENM1 or TENM3. May also form heterodimer with TENM4. Derives from the membrane form by proteolytic processing. Post-translationally, derives from the plasma membrane form by proteolytic cleavage and translocates to the nucleus. Homophilic binding of the C-terminal extracellular domain stimulates its proteolytic cleavage and release in the cytoplasmic. Is subjected to rapid degradation by the proteasome pathway. Expressed in the cortex, CA1, CA2, CA3, dentate gyrus and granular layer of the hippocampus. Expressed in the Purkinje cells and molecular layer of the cerebellum.

It localises to the cell membrane. The protein localises to the presynaptic cell membrane. Its subcellular location is the postsynaptic cell membrane. It is found in the endoplasmic reticulum. The protein resides in the golgi apparatus. It localises to the synapse. The protein localises to the cell projection. Its subcellular location is the dendritic spine. It is found in the filopodium. The protein resides in the growth cone. It localises to the nucleus. The protein localises to the PML body. Its function is as follows. Involved in neural development, regulating the establishment of proper connectivity within the nervous system. Acts as a ligand of the ADGRL1 and ADGRL3 receptors that are expressed at the surface of adjacent cells. Promotes the formation of filopodia and enlarged growth cone in neuronal cells. Mediates axon guidance and homophilic and heterophilic cell-cell adhesion. May function as a cellular signal transducer. Functionally, induces gene transcription inhibition. This chain is Teneurin-2 (Tenm2), found in Mus musculus (Mouse).